The chain runs to 317 residues: Melanocyte-stimulating hormone receptor (317 aa).

Topologically, residues 1 to 37 (MSVQGPQRRLLGSVNSTSPAAPRLGLAANQTGPRCLE) are extracellular. 2 N-linked (GlcNAc...) asparagine glycosylation sites follow: Asn15 and Asn29. The chain crosses the membrane as a helical span at residues 38-63 (VSVPDGLFLSLGLVSVVENVLVVAAI). Residues 64 to 72 (AKNRNLHSP) lie on the Cytoplasmic side of the membrane. A helical membrane pass occupies residues 73-93 (MYYFICCLAVSDLLVSVSSVL). Residues 94-118 (ETAVMLLLEAGTLAGRAAVVQQLDD) are Extracellular-facing. A helical transmembrane segment spans residues 119–140 (IIDVLVCGAMVSSLCFLGAIAV). Residues 141–163 (DRYISIFYALRYHSIVTLPRAWR) are Cytoplasmic-facing. A helical membrane pass occupies residues 164-183 (AISAIWVASVLSSTLFIAYY). At 184–191 (DHTAVLLC) the chain is on the extracellular side. A helical membrane pass occupies residues 192-211 (LVSFFVAMLVLMAVLYVHML). Topologically, residues 212 to 240 (ARACQHARGIARLHKRQRPVHQGLGLKGA) are cytoplasmic. A helical transmembrane segment spans residues 241 to 266 (ATLTILLGIFFLCWGPFFLHLSLMVL). At 267 to 279 (CPRHPICGCVFKN) the chain is on the extracellular side. Residues 280–300 (FNLFLTLIICNSIVDPLIYAF) traverse the membrane as a helical segment. Residues 301–317 (RSQELRKTLREVLLCSW) are Cytoplasmic-facing. Cys315 carries S-palmitoyl cysteine lipidation.

It belongs to the G-protein coupled receptor 1 family. As to quaternary structure, interacts with MGRN1, but does not undergo MGRN1-mediated ubiquitination; this interaction competes with GNAS-binding and thus inhibits agonist-induced cAMP production. Interacts with OPN3; the interaction results in a decrease in MC1R-mediated cAMP signaling and ultimately a decrease in melanin production in melanocytes.

The protein localises to the cell membrane. Its function is as follows. Receptor for MSH (alpha, beta and gamma) and ACTH. The activity of this receptor is mediated by G proteins which activate adenylate cyclase. Mediates melanogenesis, the production of eumelanin (black/brown) and phaeomelanin (red/yellow), via regulation of cAMP signaling in melanocytes. The polypeptide is Melanocyte-stimulating hormone receptor (MC1R) (Puma yagouaroundi (Jaguarundi)).